Consider the following 154-residue polypeptide: CASP-like protein 5B2 (154 aa).

Residues 1 to 17 are Cytoplasmic-facing; that stretch reads MAGLAGRPGSWGGLVLR. Residues 18–38 traverse the membrane as a helical segment; that stretch reads VGQALFAAACIGVMGSSLGFA. The Extracellular segment spans residues 39–42; the sequence is SYTA. The helical transmembrane segment at 43 to 63 threads the bilayer; the sequence is FCYLIASMGLQMLWSFGLACL. The Cytoplasmic portion of the chain corresponds to 64-87; sequence DGYAIRANKDLTSPILLSLFVVGD. The helical transmembrane segment at 88–107 threads the bilayer; the sequence is WVTAILSFAASSSAAGVVIL. The Extracellular segment spans residues 108-130; that stretch reads FQKDVLFCRRYPQLPCGKYELAT. The helical transmembrane segment at 131-151 threads the bilayer; that stretch reads AFAFLSWALSATSALIMFWLL. Over 152–154 the chain is Cytoplasmic; it reads AAF.

This sequence belongs to the Casparian strip membrane proteins (CASP) family. In terms of assembly, homodimer and heterodimers.

The protein localises to the cell membrane. This Zea mays (Maize) protein is CASP-like protein 5B2.